Here is a 134-residue protein sequence, read N- to C-terminus: Profilin-1 (134 aa).

A disulfide bond links Cys13 and Cys118. An Involved in PIP2 interaction motif is present at residues 84–100 (AVIRGKKGSGGITIKKT). Thr114 is modified (phosphothreonine).

This sequence belongs to the profilin family. In terms of assembly, occurs in many kinds of cells as a complex with monomeric actin in a 1:1 ratio. Post-translationally, phosphorylated by MAP kinases.

It localises to the cytoplasm. It is found in the cytoskeleton. Its function is as follows. Binds to actin and affects the structure of the cytoskeleton. At high concentrations, profilin prevents the polymerization of actin, whereas it enhances it at low concentrations. The chain is Profilin-1 from Olea europaea (Common olive).